A 557-amino-acid polypeptide reads, in one-letter code: Probable protein kinase UbiB (557 aa).

The Protein kinase domain occupies 121-509; it reads SFDTVPLASA…RKLQTRVVTA (389 aa). ATP contacts are provided by residues 127 to 135 and lysine 154; that span reads LASASIAQV. Catalysis depends on aspartate 289, which acts as the Proton acceptor. A run of 2 helical transmembrane segments spans residues 506–526 and 535–555; these read VVTA…YGLH and VPVW…VAWL.

It belongs to the ABC1 family. UbiB subfamily.

Its subcellular location is the cell inner membrane. Its pathway is cofactor biosynthesis; ubiquinone biosynthesis [regulation]. In terms of biological role, is probably a protein kinase regulator of UbiI activity which is involved in aerobic coenzyme Q (ubiquinone) biosynthesis. This Xanthomonas euvesicatoria pv. vesicatoria (strain 85-10) (Xanthomonas campestris pv. vesicatoria) protein is Probable protein kinase UbiB.